A 165-amino-acid chain; its full sequence is Large ribosomal subunit protein eL15 (165 aa).

The segment at Thr126 to Gly147 is disordered. The span at Arg130–His143 shows a compositional bias: basic residues.

It belongs to the eukaryotic ribosomal protein eL15 family. Component of the large ribosomal subunit.

It localises to the cytoplasm. Its function is as follows. Component of the large ribosomal subunit. The ribosome is a large ribonucleoprotein complex responsible for the synthesis of proteins in the cell. The protein is Large ribosomal subunit protein eL15 (RPL15) of Gallus gallus (Chicken).